A 78-amino-acid polypeptide reads, in one-letter code: Small, acid-soluble spore protein Tlp (78 aa).

The disordered stretch occupies residues 32 to 78; sequence SEEQLSFASEAEQEQIREKNERRNESIEAMRNEIHDEAEARKNGYHQ. A compositionally biased stretch (basic and acidic residues) spans 45–78; sequence EQIREKNERRNESIEAMRNEIHDEAEARKNGYHQ.

Belongs to the Tlp family.

It localises to the spore core. The chain is Small, acid-soluble spore protein Tlp from Bacillus licheniformis (strain ATCC 14580 / DSM 13 / JCM 2505 / CCUG 7422 / NBRC 12200 / NCIMB 9375 / NCTC 10341 / NRRL NRS-1264 / Gibson 46).